The sequence spans 332 residues: Methionyl-tRNA formyltransferase (332 aa).

(6S)-5,6,7,8-tetrahydrofolate is bound at residue 124 to 127; it reads SLLP.

Belongs to the Fmt family.

It carries out the reaction L-methionyl-tRNA(fMet) + (6R)-10-formyltetrahydrofolate = N-formyl-L-methionyl-tRNA(fMet) + (6S)-5,6,7,8-tetrahydrofolate + H(+). Its function is as follows. Attaches a formyl group to the free amino group of methionyl-tRNA(fMet). The formyl group appears to play a dual role in the initiator identity of N-formylmethionyl-tRNA by promoting its recognition by IF2 and preventing the misappropriation of this tRNA by the elongation apparatus. The sequence is that of Methionyl-tRNA formyltransferase from Polynucleobacter asymbioticus (strain DSM 18221 / CIP 109841 / QLW-P1DMWA-1) (Polynucleobacter necessarius subsp. asymbioticus).